A 270-amino-acid polypeptide reads, in one-letter code: Phosphatidylglycerol--prolipoprotein diacylglyceryl transferase (270 aa).

The next 4 membrane-spanning stretches (helical) occupy residues 19–39, 56–76, 92–112, and 116–136; these read FPVY…LWLA, LVLI…VIFE, QGGL…ILFA, and GVSF…GQAI. An a 1,2-diacyl-sn-glycero-3-phospho-(1'-sn-glycerol)-binding site is contributed by R138. 3 helical membrane passes run 178-198, 206-226, and 236-256; these read HPTF…LLAL, GELF…VEGL, and LRIA…FIIV.

The protein belongs to the Lgt family.

The protein localises to the cell membrane. It catalyses the reaction L-cysteinyl-[prolipoprotein] + a 1,2-diacyl-sn-glycero-3-phospho-(1'-sn-glycerol) = an S-1,2-diacyl-sn-glyceryl-L-cysteinyl-[prolipoprotein] + sn-glycerol 1-phosphate + H(+). It participates in protein modification; lipoprotein biosynthesis (diacylglyceryl transfer). Catalyzes the transfer of the diacylglyceryl group from phosphatidylglycerol to the sulfhydryl group of the N-terminal cysteine of a prolipoprotein, the first step in the formation of mature lipoproteins. The protein is Phosphatidylglycerol--prolipoprotein diacylglyceryl transferase of Bacillus cereus (strain Q1).